Consider the following 608-residue polypeptide: X-ray repair cross-complementing protein 6 (608 aa).

Residues 1 to 11 show a composition bias toward basic and acidic residues; the sequence is MSEWESYYKTE. The segment at 1–29 is disordered; it reads MSEWESYYKTEGEEEEEEEESPDTGGEYK. At Ser2 the chain carries N-acetylserine. Ser2 bears the Phosphoserine mark. The residue at position 6 (Ser6) is a Phosphoserine; by PRKDC. The segment covering 12-22 has biased composition (acidic residues); the sequence is GEEEEEEEESP. Lys29 functions as the Schiff-base intermediate with DNA; for 5'-deoxyribose-5-phosphate lyase activity in the catalytic mechanism. The residue at position 29 (Lys29) is an N6-acetyllysine. Ser49 carries the phosphoserine; by PRKDC modification. The Ku domain maps to 259–466; it reads FKLGEDVVLM…IDKMKAIVQK (208 aa). The tract at residues 275–339 is DNA-binding; it reads VQKANKPFPV…EETEELKRFD (65 aa). Residue Lys315 forms a Glycyl lysine isopeptide (Lys-Gly) (interchain with G-Cter in SUMO2) linkage. Residues Lys329, Lys336, and Lys459 each carry the N6-acetyllysine modification. Residues 371-480 form an interaction with XRCC5 region; it reads SLVSGSSTLF…YRSDSFENPV (110 aa). Phosphoserine occurs at positions 475, 518, and 548. A disordered region spans residues 534–557; the sequence is PEGKVAKRKQDDEGSTSKKPKVEL. Positions 537–557 are enriched in basic and acidic residues; that stretch reads KVAKRKQDDEGSTSKKPKVEL. Residues 548-607 form an interaction with DEAF1 region; sequence STSKKPKVELSEEELKAHFRKGTLGKLTVPTLKDICKAHGLKSGPKKQELLDALIRHLEK. A Glycyl lysine isopeptide (Lys-Gly) (interchain with G-Cter in SUMO2) cross-link involves residue Lys554. Ser558 is modified (phosphoserine). Lys568 is subject to N6,N6,N6-trimethyllysine. Positions 571-605 constitute an SAP domain; sequence LGKLTVPTLKDICKAHGLKSGPKKQELLDALIRHL. The segment at 576–581 is interaction with BAX; that stretch reads VPTLKD.

The protein belongs to the ku70 family. As to quaternary structure, heterodimer composed of XRCC5/Ku80 and XRCC6/Ku70. Component of the core long-range non-homologous end joining (NHEJ) complex (also named DNA-PK complex) composed of PRKDC, LIG4, XRCC4, XRCC6/Ku70, XRCC5/Ku86 and NHEJ1/XLF. Additional component of the NHEJ complex includes PAXX. Following autophosphorylation, PRKDC dissociates from DNA, leading to formation of the short-range NHEJ complex, composed of LIG4, XRCC4, XRCC6/Ku70, XRCC5/Ku86 and NHEJ1/XLF. The XRCC5-XRCC6 dimer also associates with NAA15, and this complex binds to the osteocalcin promoter and activates osteocalcin expression. In addition, XRCC6 interacts with the osteoblast-specific transcription factors MSX2, RUNX2 and DLX5. Interacts with ELF3. Interacts with ATP23. The XRCC5-XRRC6 dimer associates in a DNA-dependent manner with APEX1. Binds to CDK9. Identified in a complex with DEAF1 and XRCC5. Interacts with DEAF1 (via the SAND domain); the interaction is direct and may be inhibited by DNA-binding. Interacts with CLU. Interacts with NR4A3; the DNA-dependent protein kinase complex DNA-PK phosphorylates and activates NR4A3 and prevents NR4A3 ubiquitinylation and degradation. Interacts with CYREN (via KBM motif). Interacts (via N-terminus) with HSF1 (via N-terminus); this interaction is direct and prevents XRCC5/XRCC6 heterodimeric binding and non-homologous end joining (NHEJ) repair activities induced by ionizing radiation (IR). Part of the HDP-RNP complex composed of at least HEXIM1, PRKDC, XRCC5, XRCC6, paraspeckle proteins (SFPQ, NONO, PSPC1, RBM14, and MATR3) and NEAT1 RNA. Interacts with HMBOX1. Interacts with ATF7. Interacts with APLF (via KBM motif). Interacts with WRN (via KBM motif). The XRCC5-XRCC6 dimer associates with ALKBH2. Interacts with TPRN; TPRN interacts with a number of DNA damage response proteins, is recruited to sites of DNA damage and may play a role in DNA damage repair. When not acetylated, interacts with BAX. Interacts with ERCC6L2. In terms of processing, phosphorylation by PRKDC may enhance helicase activity. Phosphorylation of Ser-49 does not affect DNA repair. ADP-ribosylated by PARP3. Post-translationally, methylation by SETD4 leads to accumulation in the cytoplasm and is a prerequisite for acetylation, possibly due to the change of subcellular from the nucleus to the cytosol initiated by methylation, acetylation occurring in the cytosol. In terms of processing, acetylation can be catalyzed in vitro by CREBBP/CBP and KAT2B/PCAF.

The protein localises to the nucleus. It is found in the chromosome. The protein resides in the cytoplasm. In terms of biological role, single-stranded DNA-dependent ATP-dependent helicase that plays a key role in DNA non-homologous end joining (NHEJ) by recruiting DNA-PK to DNA. Required for double-strand break repair and V(D)J recombination. Also has a role in chromosome translocation. Has a role in chromosome translocation. The DNA helicase II complex binds preferentially to fork-like ends of double-stranded DNA in a cell cycle-dependent manner. It works in the 3'-5' direction. During NHEJ, the XRCC5-XRRC6 dimer performs the recognition step: it recognizes and binds to the broken ends of the DNA and protects them from further resection. Binding to DNA may be mediated by XRCC6. The XRCC5-XRRC6 dimer acts as a regulatory subunit of the DNA-dependent protein kinase complex DNA-PK by increasing the affinity of the catalytic subunit PRKDC to DNA by 100-fold. The XRCC5-XRRC6 dimer is probably involved in stabilizing broken DNA ends and bringing them together. The assembly of the DNA-PK complex to DNA ends is required for the NHEJ ligation step. Probably also acts as a 5'-deoxyribose-5-phosphate lyase (5'-dRP lyase), by catalyzing the beta-elimination of the 5' deoxyribose-5-phosphate at an abasic site near double-strand breaks. 5'-dRP lyase activity allows to 'clean' the termini of abasic sites, a class of nucleotide damage commonly associated with strand breaks, before such broken ends can be joined. The XRCC5-XRRC6 dimer together with APEX1 acts as a negative regulator of transcription. In association with NAA15, the XRCC5-XRRC6 dimer binds to the osteocalcin promoter and activates osteocalcin expression. Plays a role in the regulation of DNA virus-mediated innate immune response by assembling into the HDP-RNP complex, a complex that serves as a platform for IRF3 phosphorylation and subsequent innate immune response activation through the cGAS-STING pathway. Negatively regulates apoptosis by interacting with BAX and sequestering it from the mitochondria. Might have deubiquitination activity, acting on BAX. In Mus musculus (Mouse), this protein is X-ray repair cross-complementing protein 6 (Xrcc6).